A 148-amino-acid polypeptide reads, in one-letter code: Large ribosomal subunit protein bL19 (148 aa).

Belongs to the bacterial ribosomal protein bL19 family.

Functionally, this protein is located at the 30S-50S ribosomal subunit interface and may play a role in the structure and function of the aminoacyl-tRNA binding site. This is Large ribosomal subunit protein bL19 from Paramagnetospirillum magneticum (strain ATCC 700264 / AMB-1) (Magnetospirillum magneticum).